The sequence spans 479 residues: Mitochondria-eating protein (479 aa).

Coiled coils occupy residues 109–161 and 187–223; these read ERKL…LATT and LRRL…RIAR. Disordered stretches follow at residues 220-251 and 456-479; these read RIAR…GRAR and RSRS…SRSR. A compositionally biased stretch (low complexity) spans 235–249; the sequence is RSPSPLPLRSCSPGR.

It belongs to the MIEAP family.

It localises to the cytoplasm. The protein resides in the cytosol. It is found in the mitochondrion outer membrane. The protein localises to the mitochondrion matrix. Its function is as follows. Key regulator of mitochondrial quality that mediates the repairing or degradation of unhealthy mitochondria in response to mitochondrial damage. Mediator of mitochondrial protein catabolic process (also named MALM) by mediating the degradation of damaged proteins inside mitochondria by promoting the accumulation in the mitochondrial matrix of hydrolases that are characteristic of the lysosomal lumen. Also involved in mitochondrion degradation of damaged mitochondria by promoting the formation of vacuole-like structures (named MIV), which engulf and degrade unhealthy mitochondria by accumulating lysosomes. Binds cardiolipin. May form molecular condensates (non-membrane-bounded organelles) within mitochondria that compartmentalize and promote cardiolipin metabolism. The chain is Mitochondria-eating protein (SPATA18) from Gallus gallus (Chicken).